Reading from the N-terminus, the 381-residue chain is Chaperone protein DnaJ (381 aa).

A J domain is found at 5-70 (DFYEVLGVGR…QKKAAYDQYG (66 aa)). The CR-type zinc finger occupies 136–214 (GVSKEIEVPT…CHGQGRKQKT (79 aa)). Residues cysteine 149, cysteine 152, cysteine 166, cysteine 169, cysteine 188, cysteine 191, cysteine 202, and cysteine 205 each coordinate Zn(2+). 4 CXXCXGXG motif repeats span residues 149–156 (CDTCDGSG), 166–173 (CGTCHGHG), 188–195 (CPTCHGKG), and 202–209 (CNECHGQG).

The protein belongs to the DnaJ family. Homodimer. Requires Zn(2+) as cofactor.

The protein resides in the cytoplasm. Participates actively in the response to hyperosmotic and heat shock by preventing the aggregation of stress-denatured proteins and by disaggregating proteins, also in an autonomous, DnaK-independent fashion. Unfolded proteins bind initially to DnaJ; upon interaction with the DnaJ-bound protein, DnaK hydrolyzes its bound ATP, resulting in the formation of a stable complex. GrpE releases ADP from DnaK; ATP binding to DnaK triggers the release of the substrate protein, thus completing the reaction cycle. Several rounds of ATP-dependent interactions between DnaJ, DnaK and GrpE are required for fully efficient folding. Also involved, together with DnaK and GrpE, in the DNA replication of plasmids through activation of initiation proteins. The sequence is that of Chaperone protein DnaJ from Vibrio campbellii (strain ATCC BAA-1116).